The primary structure comprises 91 residues: DNA-directed RNA polymerase subunit omega (91 aa).

Belongs to the RNA polymerase subunit omega family. The RNAP catalytic core consists of 2 alpha, 1 beta, 1 beta' and 1 omega subunit. When a sigma factor is associated with the core the holoenzyme is formed, which can initiate transcription.

The enzyme catalyses RNA(n) + a ribonucleoside 5'-triphosphate = RNA(n+1) + diphosphate. In terms of biological role, promotes RNA polymerase assembly. Latches the N- and C-terminal regions of the beta' subunit thereby facilitating its interaction with the beta and alpha subunits. This chain is DNA-directed RNA polymerase subunit omega, found in Psychromonas ingrahamii (strain DSM 17664 / CCUG 51855 / 37).